Reading from the N-terminus, the 3434-residue chain is Genome polyprotein (3434 aa).

At 1-106 the chain is on the cytoplasmic side; the sequence is MSKKPGGPGR…NRGTKKKRGN (106 aa). The segment at 2–15 is interaction with host EXOC1; sequence SKKPGGPGRNRAIN. Residues 37 to 72 are hydrophobic; homodimerization of capsid protein C; the sequence is LLDGRGPVRFVLALMTFFKFTALAPTKALLGRWKRI. Positions 105-126 are cleaved as a propeptide — ER anchor for the capsid protein C, removed in mature form by serine protease NS3; it reads GNNGPGLVMIITLMTVVSMVSS. Residues 107–126 traverse the membrane as a helical segment; sequence NGPGLVMIITLMTVVSMVSS. At 127–248 the chain is on the extracellular side; sequence LKLSNFQGKV…DSTKASRYLM (122 aa). An N-linked (GlcNAc...) asparagine; by host glycan is attached at Asn141. The helical transmembrane segment at 249–273 threads the bilayer; that stretch reads KTENWIIRNPGYAFVAVLLGWMLGS. The Cytoplasmic portion of the chain corresponds to 274-278; it reads NNGQR. A helical membrane pass occupies residues 279–293; that stretch reads VVFVVLLLLVAPAYS. Over 294–745 the chain is Extracellular; the sequence is FNCLGMSNRD…QVFGGAFRTL (452 aa). Intrachain disulfides connect Cys296-Cys323, Cys353-Cys409, Cys353-Cys414, Cys367-Cys398, Cys385-Cys409, Cys385-Cys414, Cys483-Cys580, and Cys597-Cys628. Residues 391–404 form a fusion peptide region; sequence DRGWGNGCGLFGKG. A helical membrane pass occupies residues 746-766; it reads FGGMSWITQGLMGALLLWMGV. Over 767-772 the chain is Cytoplasmic; it reads NARDRS. A helical transmembrane segment spans residues 773-793; the sequence is IALVMLATGGVLLFLATNVHA. The Extracellular portion of the chain corresponds to 794–1218; that stretch reads DSGCAIDVGR…AFAEANSGGD (425 aa). Intrachain disulfides connect Cys797–Cys808 and Cys848–Cys936. Asn923, Asn968, and Asn1000 each carry an N-linked (GlcNAc...) asparagine; by host glycan. 6 cysteine pairs are disulfide-bonded: Cys972/Cys1016, Cys1073/Cys1122, Cys1084/Cys1105, Cys1084/Cys1106, Cys1105/Cys1109, and Cys1106/Cys1109. The chain crosses the membrane as a helical span at residues 1219–1239; the sequence is VVHLALIAAFKIQPGFLAMTF. At 1240–1249 the chain is on the cytoplasmic side; sequence LRGKWTNQEN. The helical transmembrane segment at 1250-1270 threads the bilayer; that stretch reads ILLALGAAFFQMAATDLNFSL. The Lumenal portion of the chain corresponds to 1271–1286; it reads PGILNATATAWMLLRA. A helical membrane pass occupies residues 1287 to 1307; the sequence is ATQPSTSAIVMPLLCLLAPGM. Arg1308 is a topological domain (cytoplasmic). The helical transmembrane segment at 1309–1329 threads the bilayer; sequence LLYLDTYRITLIIIGICSLIG. The Lumenal portion of the chain corresponds to 1330–1340; that stretch reads ERRRAAAKKKG. Residues 1341–1361 form a helical membrane-spanning segment; the sequence is AVLLGLALTSTGQFSASVMAA. Topologically, residues 1362–1373 are cytoplasmic; it reads GLMACNPNKKRG. The chain crosses the membrane as a helical span at residues 1374 to 1394; that stretch reads WPATEVLTAVGLMFAIVGGLA. Residues 1395–1397 are Lumenal-facing; it reads ELD. A helical transmembrane segment spans residues 1398-1418; the sequence is VDSMSIPFVLAGLMAVSYTIS. Topologically, residues 1419–1475 are cytoplasmic; the sequence is GKSTDLWLERAADITWETDAAITGTSQRLDVKLDDDGDFHLINDPGVPWKIWVIRMT. The tract at residues 1426 to 1465 is interacts with and activates NS3 protease; that stretch reads LERAADITWETDAAITGTSQRLDVKLDDDGDFHLINDPGV. The helical intramembrane region spans 1476–1496; sequence ALGFAAWTPWAIIPAGIGYWL. Over 1497–2173 the chain is Cytoplasmic; that stretch reads TVKYAKRGGV…MALEELPDAL (677 aa). The 178-residue stretch at 1504–1681 folds into the Peptidase S7 domain; sequence GGVFWDTPAP…EREEEPVPEA (178 aa). Catalysis depends on charge relay system; for serine protease NS3 activity residues His1554, Asp1578, and Ser1638. Positions 1684–1840 constitute a Helicase ATP-binding domain; the sequence is ADMLRKKQLT…DTNAPVTDIQ (157 aa). Residues 1688 to 1691 form an important for RNA-binding region; it reads RKKQ. 1697 to 1704 serves as a coordination point for ATP; that stretch reads LHPGAGKT. Positions 1788-1791 match the DEAH box motif; that stretch reads DEAH. One can recognise a Helicase C-terminal domain in the interval 1851 to 2016; it reads GFEWITEYTG…GLVAQMYGPE (166 aa). An N6-acetyllysine; by host modification is found at Lys1892. The disordered stretch occupies residues 1956–1980; sequence ASAAQRRGRVGRNPSQIGDEYHYGG. The tract at residues 2167–2171 is regulates the ATPase activity of NS3 helicase; the sequence is EELPD. A helical transmembrane segment spans residues 2174-2194; that stretch reads ETITLIVALAVMTAGVFLLLV. The Lumenal portion of the chain corresponds to 2195-2198; the sequence is QRRG. The segment at residues 2199-2219 is an intramembrane region (helical); it reads IGKLGLGGMVLGLATFFLWMA. Residue Asp2220 is a topological domain, lumenal. Residues 2221–2241 traverse the membrane as a helical segment; that stretch reads VSGTKIAGTLLLALLMMIVLI. Over 2242–2256 the chain is Cytoplasmic; sequence PEPEKQRSQTDNQLA. The chain crosses the membrane as a helical span at residues 2257–2277; it reads VFLICVLLVVGVVAANEYGML. Over 2278-2313 the chain is Lumenal; sequence ERTKSDLGKIFSSTRQPQSALPLPSMNALALDLRPA. Positions 2314-2334 form an intramembrane region, helical; it reads TAWALYGGSTVVLTPLIKHLV. Over 2335-2368 the chain is Lumenal; the sequence is TSEYITTSLASISAQAGSLFNLPRGLPFTELDFT. Residues 2369–2389 traverse the membrane as a helical segment; sequence VVLVFLGCWGQVSLTTLITAA. The Cytoplasmic segment spans residues 2390–2446; the sequence is ALATLHYGYMLPGWQAEALRAAQRRTAAGIMKNAVVDGLVATDVPELERTTPLMQKK. A helical transmembrane segment spans residues 2447–2467; sequence VGQILLIGVSAAALLVNPCVT. Residues 2468–2471 lie on the Lumenal side of the membrane; it reads TVRE. Residues 2472-2492 form a helical membrane-spanning segment; the sequence is AGILISAALLTLWDNGAIAVW. At 2493 to 3434 the chain is on the cytoplasmic side; it reads NSTTATGLCH…EVNVQEDRVL (942 aa). The region spanning 2530–2795 is the mRNA cap 0-1 NS5-type MT domain; it reads GRPGGRTLGE…DVNLGSGTRA (266 aa). The tract at residues 2567 to 2587 is disordered; sequence SAARKARRDGNKTGGHPVSRG. Ser2585 provides a ligand contact to S-adenosyl-L-methionine. Residue Ser2585 is modified to Phosphoserine. The active-site For 2'-O-MTase activity is Lys2590. Residues Gly2615, Trp2616, Thr2633, Lys2634, Asp2660, and Val2661 each contribute to the S-adenosyl-L-methionine site. Asp2675 serves as the catalytic For 2'-O-MTase activity. Residue Ile2676 coordinates S-adenosyl-L-methionine. Catalysis depends on for 2'-O-MTase activity residues Lys2711 and Glu2747. Tyr2749 provides a ligand contact to S-adenosyl-L-methionine. Zn(2+) contacts are provided by Glu2969, His2973, Cys2978, and Cys2981. A RdRp catalytic domain is found at 3059 to 3211; sequence GKMYADDTAG…KPLDDRFANA (153 aa). Residues His3246, Cys3262, and Cys3381 each contribute to the Zn(2+) site.

This sequence in the N-terminal section; belongs to the class I-like SAM-binding methyltransferase superfamily. mRNA cap 0-1 NS5-type methyltransferase family. Homodimer. Interacts (via N-terminus) with host EXOC1 (via C-terminus); this interaction results in EXOC1 degradation through the proteasome degradation pathway. In terms of assembly, forms heterodimers with envelope protein E in the endoplasmic reticulum and Golgi. As to quaternary structure, homodimer; in the endoplasmic reticulum and Golgi. Interacts with protein prM. Interacts with non-structural protein 1. Homodimer; Homohexamer when secreted. Interacts with envelope protein E. NS1 interacts with NS4B. Interacts with host complement protein CFH; this interaction leads to the degradation of C3. In terms of assembly, interacts (via N-terminus) with serine protease NS3. As to quaternary structure, forms a heterodimer with serine protease NS3. May form homooligomers. Forms a heterodimer with NS2B. Interacts with non-structural protein 2A (via N-terminus). Interacts with NS4B. Interacts with unphosphorylated RNA-directed RNA polymerase NS5; this interaction stimulates RNA-directed RNA polymerase NS5 guanylyltransferase activity. In terms of assembly, interacts with serine protease NS3. As to quaternary structure, homodimer. Interacts with host STAT2; this interaction inhibits the phosphorylation of the latter, and, when all viral proteins are present (polyprotein), targets STAT2 for degradation. Interacts with serine protease NS3. Post-translationally, specific enzymatic cleavages in vivo yield mature proteins. Cleavages in the lumen of endoplasmic reticulum are performed by host signal peptidase, whereas cleavages in the cytoplasmic side are performed by serine protease NS3. Signal cleavage at the 2K-4B site requires a prior NS3 protease-mediated cleavage at the 4A-2K site. Cleaved in post-Golgi vesicles by a host furin, releasing the mature small envelope protein M, and peptide pr. This cleavage is incomplete as up to 30% of viral particles still carry uncleaved prM. In terms of processing, N-glycosylated. Post-translationally, N-glycosylated. The excreted form is glycosylated and this is required for efficient secretion of the protein from infected cells. Acetylated by host KAT5. Acetylation modulates NS3 RNA-binding and unwinding activities and plays an important positive role for viral replication. In terms of processing, phosphorylated on serines residues. This phosphorylation may trigger NS5 nuclear localization.

It localises to the virion. The protein localises to the host nucleus. Its subcellular location is the host cytoplasm. It is found in the host perinuclear region. The protein resides in the secreted. It localises to the virion membrane. The protein localises to the host endoplasmic reticulum membrane. It catalyses the reaction Selective hydrolysis of -Xaa-Xaa-|-Yaa- bonds in which each of the Xaa can be either Arg or Lys and Yaa can be either Ser or Ala.. It carries out the reaction RNA(n) + a ribonucleoside 5'-triphosphate = RNA(n+1) + diphosphate. The enzyme catalyses a ribonucleoside 5'-triphosphate + H2O = a ribonucleoside 5'-diphosphate + phosphate + H(+). The catalysed reaction is ATP + H2O = ADP + phosphate + H(+). It catalyses the reaction a 5'-end (5'-triphosphoguanosine)-ribonucleoside in mRNA + S-adenosyl-L-methionine = a 5'-end (N(7)-methyl 5'-triphosphoguanosine)-ribonucleoside in mRNA + S-adenosyl-L-homocysteine. It carries out the reaction a 5'-end (N(7)-methyl 5'-triphosphoguanosine)-ribonucleoside in mRNA + S-adenosyl-L-methionine = a 5'-end (N(7)-methyl 5'-triphosphoguanosine)-(2'-O-methyl-ribonucleoside) in mRNA + S-adenosyl-L-homocysteine + H(+). Functionally, plays a role in virus budding by binding to the cell membrane and gathering the viral RNA into a nucleocapsid that forms the core of a mature virus particle. During virus entry, may induce genome penetration into the host cytoplasm after hemifusion induced by the surface proteins. Can migrate to the cell nucleus where it modulates host functions. Overcomes the anti-viral effects of host EXOC1 by sequestering and degrading the latter through the proteasome degradation pathway. In terms of biological role, inhibits RNA silencing by interfering with host Dicer. Its function is as follows. Prevents premature fusion activity of envelope proteins in trans-Golgi by binding to envelope protein E at pH6.0. After virion release in extracellular space, gets dissociated from E dimers. Acts as a chaperone for envelope protein E during intracellular virion assembly by masking and inactivating envelope protein E fusion peptide. prM is the only viral peptide matured by host furin in the trans-Golgi network probably to avoid catastrophic activation of the viral fusion activity in acidic Golgi compartment prior to virion release. prM-E cleavage is inefficient, and many virions are only partially matured. These uncleaved prM would play a role in immune evasion. Functionally, may play a role in virus budding. Exerts cytotoxic effects by activating a mitochondrial apoptotic pathway through M ectodomain. May display a viroporin activity. In terms of biological role, binds to host cell surface receptor and mediates fusion between viral and cellular membranes. Envelope protein is synthesized in the endoplasmic reticulum in the form of heterodimer with protein prM. They play a role in virion budding in the ER, and the newly formed immature particle is covered with 60 spikes composed of heterodimer between precursor prM and envelope protein E. The virion is transported to the Golgi apparatus where the low pH causes dissociation of PrM-E heterodimers and formation of E homodimers. prM-E cleavage is inefficient, and many virions are only partially matured. These uncleaved prM would play a role in immune evasion. Its function is as follows. Involved in immune evasion, pathogenesis and viral replication. Once cleaved off the polyprotein, is targeted to three destinations: the viral replication cycle, the plasma membrane and the extracellular compartment. Essential for viral replication. Required for formation of the replication complex and recruitment of other non-structural proteins to the ER-derived membrane structures. Excreted as a hexameric lipoparticle that plays a role against host immune response. Antagonizing the complement function. Binds to the host macrophages and dendritic cells. Inhibits signal transduction originating from Toll-like receptor 3 (TLR3). Component of the viral RNA replication complex that functions in virion assembly and antagonizes the host alpha/beta interferon antiviral response. Functionally, required cofactor for the serine protease function of NS3. May have membrane-destabilizing activity and form viroporins. In terms of biological role, displays three enzymatic activities: serine protease, NTPase and RNA helicase. NS3 serine protease, in association with NS2B, performs its autocleavage and cleaves the polyprotein at dibasic sites in the cytoplasm: C-prM, NS2A-NS2B, NS2B-NS3, NS3-NS4A, NS4A-2K and NS4B-NS5. NS3 RNA helicase binds RNA and unwinds dsRNA in the 3' to 5' direction. Its function is as follows. Regulates the ATPase activity of the NS3 helicase activity. NS4A allows NS3 helicase to conserve energy during unwinding. Functions as a signal peptide for NS4B and is required for the interferon antagonism activity of the latter. Functionally, induces the formation of ER-derived membrane vesicles where the viral replication takes place. Inhibits interferon (IFN)-induced host STAT1 phosphorylation and nuclear translocation, thereby preventing the establishment of cellular antiviral state by blocking the IFN-alpha/beta pathway. Inhibits STAT2 translocation in the nucleus after IFN-alpha treatment. In terms of biological role, replicates the viral (+) and (-) RNA genome, and performs the capping of genomes in the cytoplasm. NS5 methylates viral RNA cap at guanine N-7 and ribose 2'-O positions. Besides its role in RNA genome replication, also prevents the establishment of cellular antiviral state by blocking the interferon-alpha/beta (IFN-alpha/beta) signaling pathway. Inhibits host TYK2 and STAT2 phosphorylation, thereby preventing activation of JAK-STAT signaling pathway. The protein is Genome polyprotein of Usutu virus (USUV).